Reading from the N-terminus, the 660-residue chain is tRNA 5-methylaminomethyl-2-thiouridine biosynthesis bifunctional protein MnmC (660 aa).

Residues 1 to 233 are tRNA (mnm(5)s(2)U34)-methyltransferase; the sequence is MTHSHAQLVW…KRHISHGWIA (233 aa). Residues 260–660 form an FAD-dependent cmnm(5)s(2)U34 oxidoreductase region; the sequence is VGGGLAGAAS…IRRKLDPDAL (401 aa).

In the N-terminal section; belongs to the methyltransferase superfamily. tRNA (mnm(5)s(2)U34)-methyltransferase family. This sequence in the C-terminal section; belongs to the DAO family. FAD serves as cofactor.

It localises to the cytoplasm. The catalysed reaction is 5-aminomethyl-2-thiouridine(34) in tRNA + S-adenosyl-L-methionine = 5-methylaminomethyl-2-thiouridine(34) in tRNA + S-adenosyl-L-homocysteine + H(+). Catalyzes the last two steps in the biosynthesis of 5-methylaminomethyl-2-thiouridine (mnm(5)s(2)U) at the wobble position (U34) in tRNA. Catalyzes the FAD-dependent demodification of cmnm(5)s(2)U34 to nm(5)s(2)U34, followed by the transfer of a methyl group from S-adenosyl-L-methionine to nm(5)s(2)U34, to form mnm(5)s(2)U34. This Chromobacterium violaceum (strain ATCC 12472 / DSM 30191 / JCM 1249 / CCUG 213 / NBRC 12614 / NCIMB 9131 / NCTC 9757 / MK) protein is tRNA 5-methylaminomethyl-2-thiouridine biosynthesis bifunctional protein MnmC.